The primary structure comprises 488 residues: Protein nucleotidyltransferase YdiU (488 aa).

ATP is bound by residues G91, G93, R94, K114, D126, G127, R177, and R184. D253 serves as the catalytic Proton acceptor. N254 and D263 together coordinate Mg(2+). D263 serves as a coordination point for ATP.

The protein belongs to the SELO family. Mg(2+) is required as a cofactor. It depends on Mn(2+) as a cofactor.

It catalyses the reaction L-seryl-[protein] + ATP = 3-O-(5'-adenylyl)-L-seryl-[protein] + diphosphate. The enzyme catalyses L-threonyl-[protein] + ATP = 3-O-(5'-adenylyl)-L-threonyl-[protein] + diphosphate. The catalysed reaction is L-tyrosyl-[protein] + ATP = O-(5'-adenylyl)-L-tyrosyl-[protein] + diphosphate. It carries out the reaction L-histidyl-[protein] + UTP = N(tele)-(5'-uridylyl)-L-histidyl-[protein] + diphosphate. It catalyses the reaction L-seryl-[protein] + UTP = O-(5'-uridylyl)-L-seryl-[protein] + diphosphate. The enzyme catalyses L-tyrosyl-[protein] + UTP = O-(5'-uridylyl)-L-tyrosyl-[protein] + diphosphate. Functionally, nucleotidyltransferase involved in the post-translational modification of proteins. It can catalyze the addition of adenosine monophosphate (AMP) or uridine monophosphate (UMP) to a protein, resulting in modifications known as AMPylation and UMPylation. This is Protein nucleotidyltransferase YdiU from Bacillus cereus (strain B4264).